A 286-amino-acid polypeptide reads, in one-letter code: Single myb histone 5 (286 aa).

The HTH myb-type domain occupies 1 to 61; the sequence is MGAPKQRWTS…KWRNMNVIVT (61 aa). A DNA-binding region (H-T-H motif) is located at residues 28 to 57; that stretch reads WRMILNDPELSSTLRYRSNVDLKDKWRNMN. The H15 domain occupies 122-190; it reads SHSRLDNIIM…KVNRKYRIAP (69 aa). Residues 229-277 adopt a coiled-coil conformation; it reads EAAAAAAAHAVAEAEAIMAEAEAAAREAEAAEAEARAAQAFAEAAVLTL.

Belongs to the histone H1/H5 family. SMH subfamily. Forms a homodimer and heterodimers.

The protein localises to the nucleus. It is found in the chromosome. The protein resides in the nucleolus. Its subcellular location is the telomere. Binds preferentially double-stranded telomeric repeats, but may also bind to the single telomeric strand. The protein is Single myb histone 5 (SMH5) of Zea mays (Maize).